We begin with the raw amino-acid sequence, 464 residues long: MKVLLLLVCLVFAYVNASYDACYNVVCPSNYQCRAEGDQAYCVPEHHEYGCDRHSCGRGYECVERWDSFCCKPIHHRPHPHPRPPHPHPRPTNCDYTSCPREFDCHVINRNVTACLPDNHVCRDFQCPVGTHCFNGERGPHCVSDTHYPNLCRVTKCSYDFTCKMVRGNPTCLRNHDGISTHSPTHTPTHSPTTSPTHCPSCTELAPFCHSAGLVCRTILNPSCVSAVRGIINTRSCCTYIAVCASNSTSTTGATTGATTPTSTTGAATTAAATTTTATSTTGAATTAPATTTTTSTTGAATTAPATTTTSTTGAATTAPATTTTTATTIVGVTTANSVGGLTTTRATTVAGVTTANSVGGLTTAGITTVAGATTGNSVGGLTTARATTVADVTTANSVGGLTTAGVTTVAGATTGNSVGGLTTARATTVADVTTANSVGGLTTSRATTIAGATTANSIGGLTN.

Residues 1–17 (MKVLLLLVCLVFAYVNA) form the signal peptide. Positions 21 to 43 (ACYNVVCPSNYQCRAEGDQAYCV) constitute a Follistatin-like 1 domain. N-linked (GlcNAc...) asparagine glycosylation is present at asparagine 111. 2 consecutive Follistatin-like domains span residues 121-143 (VCRDFQCPVGTHCFNGERGPHCV) and 151-173 (LCRVTKCSYDFTCKMVRGNPTCL). The N-linked (GlcNAc...) asparagine glycan is linked to asparagine 247. The tract at residues 250-320 (STTGATTGAT…STTGAATTAP (71 aa)) is disordered.

As to quaternary structure, binds to the C-terminal region of pspB.

The protein resides in the spore wall. Its function is as follows. Forms a triad with cellulose and pspB that is essential for spore outer layer formation. The protein is Spore coat protein SP65 (cotE) of Dictyostelium discoideum (Social amoeba).